We begin with the raw amino-acid sequence, 334 residues long: Phosphate acyltransferase (334 aa).

It belongs to the PlsX family. In terms of assembly, homodimer. Probably interacts with PlsY.

The protein localises to the cytoplasm. The enzyme catalyses a fatty acyl-[ACP] + phosphate = an acyl phosphate + holo-[ACP]. It functions in the pathway lipid metabolism; phospholipid metabolism. Its function is as follows. Catalyzes the reversible formation of acyl-phosphate (acyl-PO(4)) from acyl-[acyl-carrier-protein] (acyl-ACP). This enzyme utilizes acyl-ACP as fatty acyl donor, but not acyl-CoA. The chain is Phosphate acyltransferase from Mycoplasma capricolum subsp. capricolum (strain California kid / ATCC 27343 / NCTC 10154).